We begin with the raw amino-acid sequence, 150 residues long: Troponin C, isoform 2B (150 aa).

An N-acetylmethionine modification is found at Met1. EF-hand domains follow at residues 7–42, 43–78, 83–118, and 119–150; these read EQLSALQKAFDSFDTDSKGFITPETVGVILRMMGVK, ISEKNLQEVISETDEDGSGELEFEEFVELAAKFLIE, ALKAELREAFRVYDRGGNGYITTDVLKEILRELDNR, and LTEEDLDSIIEEVDEDGSGTLDFNEFMQMMNG. Ca(2+) contacts are provided by Asp56, Asp58, Ser60, Glu62, and Glu67. Ca(2+) contacts are provided by Asp132, Asp134, Ser136, Thr138, and Glu143.

It belongs to the troponin C family.

Troponin is the central regulatory protein of striated muscle contraction. Tn consists of three components: Tn-I which is the inhibitor of actomyosin ATPase, Tn-T which contains the binding site for tropomyosin and Tn-C. The binding of calcium to Tn-C abolishes the inhibitory action of Tn on actin filaments. This Homarus americanus (American lobster) protein is Troponin C, isoform 2B.